A 925-amino-acid polypeptide reads, in one-letter code: Bifunctional uridylyltransferase/uridylyl-removing enzyme (925 aa).

The segment at 1–382 is uridylyltransferase; sequence MVLPTTKDAT…PPGAEVRRVP (382 aa). A uridylyl-removing region spans residues 383–738; the sequence is DSDDFIIDNN…VGFDEARGVT (356 aa). One can recognise an HD domain in the interval 498–621; it reads VDEHLIRCIG…VQSVERMKLL (124 aa). ACT domains lie at 739–820 and 849–925; these read ELTI…DVMP and MIEV…NTAE.

Belongs to the GlnD family. It depends on Mg(2+) as a cofactor.

It catalyses the reaction [protein-PII]-L-tyrosine + UTP = [protein-PII]-uridylyl-L-tyrosine + diphosphate. The catalysed reaction is [protein-PII]-uridylyl-L-tyrosine + H2O = [protein-PII]-L-tyrosine + UMP + H(+). Its activity is regulated as follows. Uridylyltransferase (UTase) activity is inhibited by glutamine, while glutamine activates uridylyl-removing (UR) activity. Its function is as follows. Modifies, by uridylylation and deuridylylation, the PII regulatory proteins (GlnB and homologs), in response to the nitrogen status of the cell that GlnD senses through the glutamine level. Under low glutamine levels, catalyzes the conversion of the PII proteins and UTP to PII-UMP and PPi, while under higher glutamine levels, GlnD hydrolyzes PII-UMP to PII and UMP (deuridylylation). Thus, controls uridylylation state and activity of the PII proteins, and plays an important role in the regulation of nitrogen assimilation and metabolism. The sequence is that of Bifunctional uridylyltransferase/uridylyl-removing enzyme from Nitrobacter winogradskyi (strain ATCC 25391 / DSM 10237 / CIP 104748 / NCIMB 11846 / Nb-255).